We begin with the raw amino-acid sequence, 149 residues long: 3-dehydroquinate dehydratase (149 aa).

The Proton acceptor role is filled by Tyr26. The substrate site is built by Asn77, His83, and Asp90. Residue His103 is the Proton donor of the active site. Substrate is bound by residues 104–105 (LS) and Arg114.

Belongs to the type-II 3-dehydroquinase family. In terms of assembly, homododecamer.

It carries out the reaction 3-dehydroquinate = 3-dehydroshikimate + H2O. It participates in metabolic intermediate biosynthesis; chorismate biosynthesis; chorismate from D-erythrose 4-phosphate and phosphoenolpyruvate: step 3/7. Catalyzes a trans-dehydration via an enolate intermediate. In Vibrio parahaemolyticus serotype O3:K6 (strain RIMD 2210633), this protein is 3-dehydroquinate dehydratase.